We begin with the raw amino-acid sequence, 156 residues long: Lipoprotein signal peptidase (156 aa).

3 consecutive transmembrane segments (helical) span residues 37–57, 68–88, and 95–115; these read VIPG…FGFL, FFVV…KSAE, and ILGL…RILY. Active-site residues include aspartate 120 and aspartate 138. A helical transmembrane segment spans residues 133-153; it reads AFNVADIAICLGAFAMIVSFY.

It belongs to the peptidase A8 family.

The protein resides in the cell inner membrane. It catalyses the reaction Release of signal peptides from bacterial membrane prolipoproteins. Hydrolyzes -Xaa-Yaa-Zaa-|-(S,diacylglyceryl)Cys-, in which Xaa is hydrophobic (preferably Leu), and Yaa (Ala or Ser) and Zaa (Gly or Ala) have small, neutral side chains.. It participates in protein modification; lipoprotein biosynthesis (signal peptide cleavage). Its function is as follows. This protein specifically catalyzes the removal of signal peptides from prolipoproteins. This Maridesulfovibrio salexigens (strain ATCC 14822 / DSM 2638 / NCIMB 8403 / VKM B-1763) (Desulfovibrio salexigens) protein is Lipoprotein signal peptidase.